A 185-amino-acid polypeptide reads, in one-letter code: Ribosome-recycling factor (185 aa).

This sequence belongs to the RRF family.

The protein resides in the cytoplasm. In terms of biological role, responsible for the release of ribosomes from messenger RNA at the termination of protein biosynthesis. May increase the efficiency of translation by recycling ribosomes from one round of translation to another. The protein is Ribosome-recycling factor of Kineococcus radiotolerans (strain ATCC BAA-149 / DSM 14245 / SRS30216).